Consider the following 183-residue polypeptide: Large ribosomal subunit protein uL5 (183 aa).

This sequence belongs to the universal ribosomal protein uL5 family. As to quaternary structure, part of the 50S ribosomal subunit; part of the 5S rRNA/L5/L18/L25 subcomplex. Contacts the 5S rRNA and the P site tRNA. Forms a bridge to the 30S subunit in the 70S ribosome.

This is one of the proteins that bind and probably mediate the attachment of the 5S RNA into the large ribosomal subunit, where it forms part of the central protuberance. In the 70S ribosome it contacts protein S13 of the 30S subunit (bridge B1b), connecting the 2 subunits; this bridge is implicated in subunit movement. Contacts the P site tRNA; the 5S rRNA and some of its associated proteins might help stabilize positioning of ribosome-bound tRNAs. This chain is Large ribosomal subunit protein uL5, found in Chlorobaculum tepidum (strain ATCC 49652 / DSM 12025 / NBRC 103806 / TLS) (Chlorobium tepidum).